The primary structure comprises 661 residues: Peroxisomal acyl-coenzyme A oxidase 1 (661 aa).

Ser-26 carries the phosphoserine modification. The residue at position 65 (Lys-65) is an N6-acetyllysine. An N6-succinyllysine modification is found at Lys-89. Thr-139 is a binding site for FAD. Lys-159 is modified (N6-succinyllysine). Gly-178 provides a ligand contact to FAD. At Lys-216 the chain carries N6-acetyllysine. Lys-241 carries the N6-succinyllysine modification. 3 positions are modified to N6-acetyllysine: Lys-255, Lys-267, and Lys-272. N6-succinyllysine is present on Lys-349. The active-site Proton acceptor is the Glu-421. 2 positions are modified to N6-acetyllysine; alternate: Lys-437 and Lys-446. N6-succinyllysine; alternate occurs at positions 437 and 446. Lys-500 is modified (N6-acetyllysine). Lys-512 is subject to N6-acetyllysine; alternate. An N6-succinyllysine; alternate modification is found at Lys-512. Lys-542 carries the N6-succinyllysine modification. Lys-637 is subject to N6-acetyllysine; alternate. Lys-637 carries the N6-succinyllysine; alternate modification. Lys-643 is subject to N6-succinyllysine. Phosphoserine is present on Ser-649. Lys-652 carries the post-translational modification N6-acetyllysine. At Lys-655 the chain carries N6-succinyllysine. A Microbody targeting signal motif is present at residues 659-661 (SKL).

Belongs to the acyl-CoA oxidase family. As to quaternary structure, homodimer. Interacts with LONP2. FAD is required as a cofactor.

It localises to the peroxisome. The catalysed reaction is a 2,3-saturated acyl-CoA + O2 = a (2E)-enoyl-CoA + H2O2. The enzyme catalyses hexadecanoyl-CoA + O2 = (2E)-hexadecenoyl-CoA + H2O2. It carries out the reaction dodecanoyl-CoA + O2 = (2E)-dodecenoyl-CoA + H2O2. It catalyses the reaction octanoyl-CoA + O2 = (2E)-octenoyl-CoA + H2O2. The catalysed reaction is decanoyl-CoA + O2 = (2E)-decenoyl-CoA + H2O2. The enzyme catalyses tetradecanoyl-CoA + O2 = (2E)-tetradecenoyl-CoA + H2O2. It carries out the reaction hexadecanedioyl-CoA + O2 = (2E)-hexadecenedioyl-CoA + H2O2. It catalyses the reaction tetracosanoyl-CoA + O2 = (2E)-tetracosenoyl-CoA + H2O2. The catalysed reaction is glutaryl-CoA + O2 = (2E)-glutaconyl-CoA + H2O2. The enzyme catalyses hexanoyl-CoA + O2 = (2E)-hexenoyl-CoA + H2O2. It carries out the reaction octadecanoyl-CoA + O2 = (2E)-octadecenoyl-CoA + H2O2. It catalyses the reaction (5Z,8Z,11Z,14Z,17Z)-eicosapentaenoyl-CoA + O2 = (2E,5Z,8Z,11Z,14Z,17Z)-icosahexaenoyl-CoA + H2O2. The catalysed reaction is (6Z,9Z,12Z,15Z,18Z,21Z)-tetracosahexaenoyl-CoA + O2 = (2E,6Z,9Z,12Z,15Z,18Z,21Z)-tetracosaheptaenoyl-CoA + H2O2. It functions in the pathway lipid metabolism; peroxisomal fatty acid beta-oxidation. Its function is as follows. Involved in the initial and rate-limiting step of peroxisomal beta-oxidation of straight-chain saturated and unsaturated very-long-chain fatty acids. Catalyzes the desaturation of fatty acyl-CoAs such as palmitoyl-CoA (hexadecanoyl-CoA) to 2-trans-enoyl-CoAs ((2E)-enoyl-CoAs) such as (2E)-hexadecenoyl-CoA, and donates electrons directly to molecular oxygen (O(2)), thereby producing hydrogen peroxide (H(2)O(2)). The chain is Peroxisomal acyl-coenzyme A oxidase 1 from Cavia porcellus (Guinea pig).